The sequence spans 790 residues: Protein sel-1 homolog 1 (790 aa).

An N-terminal signal peptide occupies residues 1-21; sequence MQVRVRLSLLLLCAVLLGSAA. Residues 22-51 form a disordered region; sequence ATSDDKTNQDDSLDSKSSLPTDESVKDHTT. The Lumenal portion of the chain corresponds to 22–734; that stretch reads ATSDDKTNQD…LFTQLDMDQL (713 aa). Positions 23–733 are interaction with ERLEC1, OS9 and SYVN1; that stretch reads TSDDKTNQDD…DLFTQLDMDQ (711 aa). Residue S64 is modified to Phosphoserine. The span at 67 to 78 shows a compositional bias: acidic residues; it reads AEVESLLQDEED. The segment at 67–98 is disordered; sequence AEVESLLQDEEDSSKTQEEEISFLESPNPSSK. One can recognise a Fibronectin type-II domain in the interval 118–166; that stretch reads AHGEPCHFPFLFLDKEYDECTSDGREDGRLWCATTYDYKTDEKWGFCET. 2 cysteine pairs are disulfide-bonded: C123–C149 and C137–C164. Sel1-like repeat units follow at residues 179-214, 215-250, 251-286, 287-322, 369-405, 406-442, 443-478, 479-514, and 515-550; these read AEMI…GMNH, TKAL…EEGS, PKGQ…LGGN, LIAH…NHVA, VQAQ…NAGN, SHAM…DMGN, PVGQ…EQGW, VDGQ…QGGH, and ILAF…ERGR. N-linked (GlcNAc...) asparagine glycans are attached at residues N191 and N213. N-linked (GlcNAc...) asparagine glycosylation is present at N268. The important for homodimerization and oligomerization stretch occupies residues 348–533; sequence NSGMLEEDLI…MHASGTGVMR (186 aa). N427 carries N-linked (GlcNAc...) asparagine glycosylation. N-linked (GlcNAc...) asparagine glycosylation is present at N604. Sel1-like repeat units lie at residues 623–658 and 660–695; these read TVAR…EQQH and AQAM…EASP. The interval 639–719 is interaction with SYVN1; sequence TDVDYETAFI…VVYFLQYIRE (81 aa). Residues 734 to 790 form a mediates retention in the endoplasmic reticulum region; the sequence is LLGPEWDLYLMTIIALLLGTVIAYRQRQHQDIPVPRPPGPRPAPPQQEGPPEQQPPQ. The helical transmembrane segment at 735-755 threads the bilayer; it reads LGPEWDLYLMTIIALLLGTVI. The Cytoplasmic portion of the chain corresponds to 756 to 790; sequence AYRQRQHQDIPVPRPPGPRPAPPQQEGPPEQQPPQ. The segment at 763–790 is disordered; the sequence is QDIPVPRPPGPRPAPPQQEGPPEQQPPQ. Over residues 767 to 790 the composition is skewed to pro residues; sequence VPRPPGPRPAPPQQEGPPEQQPPQ.

The protein belongs to the sel-1 family. In terms of assembly, homodimer and homooligomer. May form a complex with ERLEC1, HSPA5, OS9, and SYVN1. Interacts with FOXRED2 and EDEM1. Interacts with LPL and LMF1; may stabilize the complex formed by LPL and LMF1 and thereby promote the export of LPL dimers. Component of the HRD1 complex, which comprises at least SYNV1/HRD1, DERL1/2, FAM8A1, HERPUD1/HERP, OS9, SEL1L and UBE2J1. SYNV1 assembles with SEL1L and FAM8A1 through its transmembrane domains, but interaction with its cytoplasmic domain is required to confer stability to FAM8A1 and enhance recruitment of HERPUD1. The interaction with SYNV1/HRD1 is direct. Post-translationally, N-glycosylated. In terms of tissue distribution, highly expressed in pancreas, white adipose tissue, liver and spleen (at protein level). Detected in heart, brain, spleen, lung, liver, kidney and testis.

It localises to the endoplasmic reticulum membrane. Its function is as follows. Plays a role in the endoplasmic reticulum quality control (ERQC) system also called ER-associated degradation (ERAD) involved in ubiquitin-dependent degradation of misfolded endoplasmic reticulum proteins. Enhances SYVN1 stability. Plays a role in LPL maturation and secretion. Required for normal differentiation of the pancreas epithelium, and for normal exocrine function and survival of pancreatic cells. May play a role in Notch signaling. The sequence is that of Protein sel-1 homolog 1 (Sel1l) from Mus musculus (Mouse).